Here is a 660-residue protein sequence, read N- to C-terminus: Bifunctional polymyxin resistance protein ArnA (660 aa).

A formyltransferase ArnAFT region spans residues 1-304 (MKAVIFAYHD…TLGLVAGARL (304 aa)). Histidine 104 acts as the Proton donor; for formyltransferase activity in catalysis. (6R)-10-formyltetrahydrofolate contacts are provided by residues arginine 114 and 136–140 (VKRAD). The interval 314–660 (RRIRVLILGV…RSVDVAERAS (347 aa)) is dehydrogenase ArnADH. NAD(+) contacts are provided by residues aspartate 347 and 368–369 (DI). Residues alanine 393, tyrosine 398, and 432-433 (TS) each bind UDP-alpha-D-glucuronate. Glutamate 434 functions as the Proton acceptor; for decarboxylase activity in the catalytic mechanism. UDP-alpha-D-glucuronate is bound by residues arginine 460, asparagine 492, 526–535 (KLIDGGQQKR), and tyrosine 613. The active-site Proton donor; for decarboxylase activity is the arginine 619.

The protein in the N-terminal section; belongs to the Fmt family. UDP-L-Ara4N formyltransferase subfamily. It in the C-terminal section; belongs to the NAD(P)-dependent epimerase/dehydratase family. UDP-glucuronic acid decarboxylase subfamily. In terms of assembly, homohexamer, formed by a dimer of trimers.

The enzyme catalyses UDP-alpha-D-glucuronate + NAD(+) = UDP-beta-L-threo-pentopyranos-4-ulose + CO2 + NADH. The catalysed reaction is UDP-4-amino-4-deoxy-beta-L-arabinose + (6R)-10-formyltetrahydrofolate = UDP-4-deoxy-4-formamido-beta-L-arabinose + (6S)-5,6,7,8-tetrahydrofolate + H(+). The protein operates within nucleotide-sugar biosynthesis; UDP-4-deoxy-4-formamido-beta-L-arabinose biosynthesis; UDP-4-deoxy-4-formamido-beta-L-arabinose from UDP-alpha-D-glucuronate: step 1/3. It participates in nucleotide-sugar biosynthesis; UDP-4-deoxy-4-formamido-beta-L-arabinose biosynthesis; UDP-4-deoxy-4-formamido-beta-L-arabinose from UDP-alpha-D-glucuronate: step 3/3. It functions in the pathway bacterial outer membrane biogenesis; lipopolysaccharide biosynthesis. Bifunctional enzyme that catalyzes the oxidative decarboxylation of UDP-glucuronic acid (UDP-GlcUA) to UDP-4-keto-arabinose (UDP-Ara4O) and the addition of a formyl group to UDP-4-amino-4-deoxy-L-arabinose (UDP-L-Ara4N) to form UDP-L-4-formamido-arabinose (UDP-L-Ara4FN). The modified arabinose is attached to lipid A and is required for resistance to polymyxin and cationic antimicrobial peptides. This chain is Bifunctional polymyxin resistance protein ArnA, found in Salmonella enteritidis PT4 (strain P125109).